A 1185-amino-acid chain; its full sequence is MTSKYDALLHNQSTNTNPFSKLQDRSSLLGEKFTKVLVANRSEIAIRVFRTAHELSMHTVAIYSYEDRLSMHRQKADESYPIGKVGQYSPVGAYLAIDEIVSIAKRTGANLVHPGYGFLSENAEFARKVNEAGMQFVGPSPEVIDSLGDKTKARAIAIRCGVPVVPGTPGPVEHYEEAEAFVKEYGLPVIIKAAMGGGGRGMRVVRSADTLKESFERARSEALASFGDGTVFIERFLDKPKHIEIQLMADKAGNVIHLHERDCSVQRRHQKVVEIAPAKDLDPKIRQALYDDAIKIAKEVKYCNAGTAEFLLDQKGRHYFIEINPRIQVEHTITEEITGVDIVSAQLHVAAGFTLPEIGLTQDKISTRGFAIQCRVTTEDPNNGFAPDIGKIEVYRSAGGNGVRLDGANGFAGSVITPHYDSMLVKCTCHDATYEYTRRKMIRSLIEFRVRGVKTNIPFVLRLLMHDTFIQGNCWTTFIDDTPELFQLYRSRNRAQKLLAYLGDLAVNGSSIKGQNGEPALKSEIVMPVLLDSTGNQIDVSHPSEKGWRKLLLDNGPAAFAKAVRNHKRGLIMDTTWRDAHQSLLATRVRTIDLVNIAPYTSHALASAYSLEMWGGATFDVSMRFLHECPWDRLRRLRKLVPNIPFQMLLRGANGLCYSSLPDNVIYFFCEQAKKNGIDIFRVFDALNDVNNLSLGIDAAKRAGGVVEATMCYSGDMLNPKKKYNLDYYVNLVDKMVEMGIHILGIKDMAGVMKPKAARLLISAIREKHPELPIHVHTHDSAGTAVASMAAALEAGADVVDVATDSMSGLTSQPSFGAVLASVDGTDKQLEFDNNQLREIDSYWAQMRLLYSPFESEIKGTDSDVYNHEIPGGQLTNLKFQATSLGLGTQWAETKKAYIEANKLLGDIIKVTPTSKVVGDLAQFMVQNKLSAEDVENRATTLDFPASVLDFFQGLMGQPYGGFPEPLRTNVLKGRRQPLTDRPGKFLPAADFDAIRKLLSEKFGVSSDCDIAAYTQFPGVFEEYRQFVDRYGDLTTVPTKFFLSRPEMNEEMHVEIDQGKTLIVKFVALGPLNPRTGQREVYFELNGENRHVTVEDKKAAIETVTRPRADPGNPGHVAAPMSGTIVEIRVKEGAKVKKGDIIAVLSAMKMEIVISAPHSGVLKSLAVVQGDSVNGGDLCAVLEHE.

The 453-residue stretch at 32-484 (KFTKVLVANR…WTTFIDDTPE (453 aa)) folds into the Biotin carboxylation domain. Residues lysine 150, glutamate 234, and histidine 269 each coordinate ATP. The 198-residue stretch at 154–351 (RAIAIRCGVP…IVSAQLHVAA (198 aa)) folds into the ATP-grasp domain. Arginine 326 is an active-site residue. The region spanning 570–838 (GLIMDTTWRD…QLEFDNNQLR (269 aa)) is the Pyruvate carboxyltransferase domain. Substrate is bound by residues 578-582 (RDAHQ) and arginine 651. An a divalent metal cation-binding site is contributed by aspartate 579. 3 residues coordinate a divalent metal cation: lysine 747, histidine 777, and histidine 779. Lysine 747 is modified (N6-carboxylysine). Threonine 912 contacts substrate. Residues 1108–1183 (RADPGNPGHV…NGGDLCAVLE (76 aa)) form the Biotinyl-binding domain. The residue at position 1149 (lysine 1149) is an N6-biotinyllysine.

It depends on biotin as a cofactor. Zn(2+) is required as a cofactor.

The protein localises to the cytoplasm. The catalysed reaction is hydrogencarbonate + pyruvate + ATP = oxaloacetate + ADP + phosphate + H(+). The protein operates within carbohydrate biosynthesis; gluconeogenesis. Functionally, pyruvate carboxylase catalyzes a 2-step reaction, involving the ATP-dependent carboxylation of the covalently attached biotin in the first step and the transfer of the carboxyl group to pyruvate in the second. This Schizosaccharomyces pombe (strain 972 / ATCC 24843) (Fission yeast) protein is Pyruvate carboxylase (pyr1).